The sequence spans 406 residues: CinA-like protein (406 aa).

This sequence belongs to the CinA family.

This chain is CinA-like protein, found in Deinococcus geothermalis (strain DSM 11300 / CIP 105573 / AG-3a).